We begin with the raw amino-acid sequence, 149 residues long: UPF0260 protein RCAP_rcc02083 (149 aa).

Belongs to the UPF0260 family.

This Rhodobacter capsulatus (strain ATCC BAA-309 / NBRC 16581 / SB1003) protein is UPF0260 protein RCAP_rcc02083.